Reading from the N-terminus, the 316-residue chain is 4-hydroxy-3-methylbut-2-enyl diphosphate reductase (316 aa).

Cys-12 contributes to the [4Fe-4S] cluster binding site. Positions 41 and 74 each coordinate (2E)-4-hydroxy-3-methylbut-2-enyl diphosphate. Positions 41 and 74 each coordinate dimethylallyl diphosphate. Isopentenyl diphosphate contacts are provided by His-41 and His-74. Cys-96 is a [4Fe-4S] cluster binding site. His-124 provides a ligand contact to (2E)-4-hydroxy-3-methylbut-2-enyl diphosphate. His-124 serves as a coordination point for dimethylallyl diphosphate. An isopentenyl diphosphate-binding site is contributed by His-124. The active-site Proton donor is the Glu-126. Residue Thr-167 coordinates (2E)-4-hydroxy-3-methylbut-2-enyl diphosphate. Cys-197 contributes to the [4Fe-4S] cluster binding site. (2E)-4-hydroxy-3-methylbut-2-enyl diphosphate is bound by residues Ser-225, Ser-226, Asn-227, and Ser-269. Dimethylallyl diphosphate contacts are provided by Ser-225, Ser-226, Asn-227, and Ser-269. Positions 225, 226, 227, and 269 each coordinate isopentenyl diphosphate.

This sequence belongs to the IspH family. Homodimer. It depends on [4Fe-4S] cluster as a cofactor.

The enzyme catalyses isopentenyl diphosphate + 2 oxidized [2Fe-2S]-[ferredoxin] + H2O = (2E)-4-hydroxy-3-methylbut-2-enyl diphosphate + 2 reduced [2Fe-2S]-[ferredoxin] + 2 H(+). The catalysed reaction is dimethylallyl diphosphate + 2 oxidized [2Fe-2S]-[ferredoxin] + H2O = (2E)-4-hydroxy-3-methylbut-2-enyl diphosphate + 2 reduced [2Fe-2S]-[ferredoxin] + 2 H(+). It participates in isoprenoid biosynthesis; dimethylallyl diphosphate biosynthesis; dimethylallyl diphosphate from (2E)-4-hydroxy-3-methylbutenyl diphosphate: step 1/1. The protein operates within isoprenoid biosynthesis; isopentenyl diphosphate biosynthesis via DXP pathway; isopentenyl diphosphate from 1-deoxy-D-xylulose 5-phosphate: step 6/6. Its function is as follows. Catalyzes the conversion of 1-hydroxy-2-methyl-2-(E)-butenyl 4-diphosphate (HMBPP) into a mixture of isopentenyl diphosphate (IPP) and dimethylallyl diphosphate (DMAPP). Acts in the terminal step of the DOXP/MEP pathway for isoprenoid precursor biosynthesis. In Salmonella schwarzengrund (strain CVM19633), this protein is 4-hydroxy-3-methylbut-2-enyl diphosphate reductase.